Reading from the N-terminus, the 212-residue chain is Cyclin-dependent kinase inhibitor 3 (212 aa).

The segment covering 1–12 (MKPPSSIQTSEF) has biased composition (polar residues). The tract at residues 1-23 (MKPPSSIQTSEFDSSDEEPIEDE) is disordered. Positions 1 to 34 (MKPPSSIQTSEFDSSDEEPIEDEQTPIQISWLPL) are interaction with CDK2. The span at 13 to 23 (DSSDEEPIEDE) shows a compositional bias: acidic residues. Positions 32-201 (LPLSRVNYSQ…FRDKLAAHLS (170 aa)) constitute a Tyrosine-protein phosphatase domain. Residue Cys140 is the Phosphocysteine intermediate of the active site.

Belongs to the protein-tyrosine phosphatase family. As to quaternary structure, interacts with cyclin-dependent kinases such as CDK1, CDK2 and CDK3. Does not interact with CDK4. Interacts (via C-terminus) with phosphorylated CDK2 (via C-terminal helix). Interacts with MS4A3 (via C-terminus); the interaction enhances CDKN3 enzymatic activity.

Its subcellular location is the cytoplasm. It is found in the perinuclear region. The enzyme catalyses O-phospho-L-tyrosyl-[protein] + H2O = L-tyrosyl-[protein] + phosphate. The catalysed reaction is O-phospho-L-seryl-[protein] + H2O = L-seryl-[protein] + phosphate. It catalyses the reaction O-phospho-L-threonyl-[protein] + H2O = L-threonyl-[protein] + phosphate. In terms of biological role, may play a role in cell cycle regulation. Dual specificity phosphatase active toward substrates containing either phosphotyrosine or phosphoserine residues. Dephosphorylates CDK2 at 'Thr-160' in a cyclin-dependent manner. In Sus scrofa (Pig), this protein is Cyclin-dependent kinase inhibitor 3.